Reading from the N-terminus, the 133-residue chain is Large ribosomal subunit protein uL14 (133 aa).

This sequence belongs to the universal ribosomal protein uL14 family. As to quaternary structure, part of the 50S ribosomal subunit. Forms a cluster with proteins L3 and L24e, part of which may contact the 16S rRNA in 2 intersubunit bridges.

Its function is as follows. Binds to 23S rRNA. Forms part of two intersubunit bridges in the 70S ribosome. The sequence is that of Large ribosomal subunit protein uL14 from Nanoarchaeum equitans (strain Kin4-M).